The sequence spans 512 residues: Sodium-dependent phosphate transport protein 1, chloroplastic (512 aa).

Residues 1–59 constitute a chloroplast transit peptide; sequence MNARALLCSSNIHSLYTSNRPPEKTSSSRSLRNLKPSPKSLRVWIYPRNRSSVFRVLVR. 11 helical membrane passes run 103-123, 141-161, 171-191, 192-212, 234-254, 257-277, 323-343, 361-381, 401-421, 453-473, and 486-506; these read WVIV…RVNM, VGLI…AGGI, VLGF…VAAK, LGLP…GVAM, LVYS…PFLI, FGWP…LTLW, VWAL…LLTW, LLSV…GWIA, IGFL…SPTM, GVLL…GTAA, and VFTI…LFST.

It belongs to the major facilitator superfamily. Sodium/anion cotransporter (TC 2.A.1.14) family. As to expression, expressed in flower buds, sepals of mature flowers and mature leaves, less in senescent leaves and at low levels in roots.

The protein localises to the plastid. It is found in the chloroplast thylakoid membrane. Functionally, specific for inorganic phosphate transport across the thylakoid membrane in a sodium dependent manner. Binds glutamate but cannot transport it. May act as an ascorbate transporter at the thylakoid membrane. The chain is Sodium-dependent phosphate transport protein 1, chloroplastic (ANTR1) from Arabidopsis thaliana (Mouse-ear cress).